Here is an 89-residue protein sequence, read N- to C-terminus: Small ribosomal subunit protein uS15 (89 aa).

The protein belongs to the universal ribosomal protein uS15 family. In terms of assembly, part of the 30S ribosomal subunit. Forms a bridge to the 50S subunit in the 70S ribosome, contacting the 23S rRNA.

In terms of biological role, one of the primary rRNA binding proteins, it binds directly to 16S rRNA where it helps nucleate assembly of the platform of the 30S subunit by binding and bridging several RNA helices of the 16S rRNA. Its function is as follows. Forms an intersubunit bridge (bridge B4) with the 23S rRNA of the 50S subunit in the ribosome. The polypeptide is Small ribosomal subunit protein uS15 (Vibrio cholerae serotype O1 (strain ATCC 39541 / Classical Ogawa 395 / O395)).